Consider the following 84-residue polypeptide: Small ribosomal subunit protein bS20 (84 aa).

This sequence belongs to the bacterial ribosomal protein bS20 family.

In terms of biological role, binds directly to 16S ribosomal RNA. This is Small ribosomal subunit protein bS20 from Lacticaseibacillus casei (strain BL23) (Lactobacillus casei).